The following is a 313-amino-acid chain: Probable 5-dehydro-4-deoxyglucarate dehydratase 1 (313 aa).

It belongs to the DapA family.

The catalysed reaction is 5-dehydro-4-deoxy-D-glucarate + H(+) = 2,5-dioxopentanoate + CO2 + H2O. It participates in carbohydrate acid metabolism; D-glucarate degradation; 2,5-dioxopentanoate from D-glucarate: step 2/2. The protein is Probable 5-dehydro-4-deoxyglucarate dehydratase 1 of Streptomyces avermitilis (strain ATCC 31267 / DSM 46492 / JCM 5070 / NBRC 14893 / NCIMB 12804 / NRRL 8165 / MA-4680).